Reading from the N-terminus, the 369-residue chain is Transposase for insertion sequence element IS1201 (369 aa).

This sequence belongs to the transposase mutator family.

In terms of biological role, required for the transposition of the insertion element. This chain is Transposase for insertion sequence element IS1201, found in Lactobacillus helveticus (Lactobacillus suntoryeus).